The primary structure comprises 102 residues: Large ribosomal subunit protein eL30 (102 aa).

This sequence belongs to the eukaryotic ribosomal protein eL30 family. In terms of assembly, part of the 50S ribosomal subunit.

The sequence is that of Large ribosomal subunit protein eL30 from Thermococcus kodakarensis (strain ATCC BAA-918 / JCM 12380 / KOD1) (Pyrococcus kodakaraensis (strain KOD1)).